Reading from the N-terminus, the 419-residue chain is D-amino acid dehydrogenase (419 aa).

Residue 3 to 17 (VIVLGSGVIGVASAY) participates in FAD binding.

It belongs to the DadA oxidoreductase family. It depends on FAD as a cofactor.

It catalyses the reaction a D-alpha-amino acid + A + H2O = a 2-oxocarboxylate + AH2 + NH4(+). It functions in the pathway amino-acid degradation; D-alanine degradation; NH(3) and pyruvate from D-alanine: step 1/1. Oxidative deamination of D-amino acids. In Acinetobacter baylyi (strain ATCC 33305 / BD413 / ADP1), this protein is D-amino acid dehydrogenase.